A 476-amino-acid polypeptide reads, in one-letter code: ATP synthase subunit beta, chloroplastic (476 aa).

155–162 (GGAGVGKT) is a binding site for ATP.

The protein belongs to the ATPase alpha/beta chains family. F-type ATPases have 2 components, CF(1) - the catalytic core - and CF(0) - the membrane proton channel. CF(1) has five subunits: alpha(3), beta(3), gamma(1), delta(1), epsilon(1). CF(0) has four main subunits: a(1), b(1), b'(1) and c(9-12).

It is found in the plastid. The protein localises to the chloroplast thylakoid membrane. The enzyme catalyses ATP + H2O + 4 H(+)(in) = ADP + phosphate + 5 H(+)(out). Functionally, produces ATP from ADP in the presence of a proton gradient across the membrane. The catalytic sites are hosted primarily by the beta subunits. The protein is ATP synthase subunit beta, chloroplastic of Emiliania huxleyi (Coccolithophore).